The following is a 714-amino-acid chain: Phenylalanine 2-monooxygenase precursor (714 aa).

A propeptide spans Met1–Glu15 (removed in mature form; occupies the channel of the substrate amino acid from the outside of the protein to the interior flavin ring in the precursor). FAD-binding positions include Gly2, Gly68, and Glu95 to Ala96. Positions Ile108–Lys109 are cleaved as a propeptide — linker peptide. FAD-binding positions include Arg120, Gly141–Arg144, and Val375. Arg144 lines the substrate pocket. Tyr537 contributes to the substrate binding site. FAD-binding positions include Ser652 to Asp653 and Gly660 to Leu662. Position 660 (Gly660) interacts with substrate.

The protein belongs to the phenylalanine 2-monooxygenase family. As to quaternary structure, heterotetramer composed of 2 alpha and 2 beta subunits. The cofactor is FAD. In terms of processing, proteolytically cleaved to yield the active enzyme. Cleavage of the linkage between the 2 subunits causes reshaping of the oxygen channel and the hydrophobic environment around the flavin ring. Removal of the prosequence causes opening of the amino acid channel.

The catalysed reaction is L-phenylalanine + O2 = 2-phenylacetamide + CO2 + H2O. Its function is as follows. Catalyzes both oxygenative decarboxylation and oxidative deamination, depending on the substrate used. Has high activity for L-Phe and L-Tyr, but relatively low activities for L-Met and L-Trp. L-Phe is mainly oxygenated and L-Met is mainly oxidized. The sequence is that of Phenylalanine 2-monooxygenase precursor from Pseudomonas sp.